The chain runs to 360 residues: Glutamate 5-kinase (360 aa).

ATP is bound at residue Lys-7. Residues Ser-47, Asp-134, and Asn-146 each contribute to the substrate site. Residues 166–167 and 210–216 each bind ATP; these read TD and TGGISTK. The PUA domain maps to 275–356; sequence VGKITLDDGA…SSIIVVHRDV (82 aa).

The protein belongs to the glutamate 5-kinase family.

It localises to the cytoplasm. The enzyme catalyses L-glutamate + ATP = L-glutamyl 5-phosphate + ADP. The protein operates within amino-acid biosynthesis; L-proline biosynthesis; L-glutamate 5-semialdehyde from L-glutamate: step 1/2. Functionally, catalyzes the transfer of a phosphate group to glutamate to form L-glutamate 5-phosphate. The protein is Glutamate 5-kinase of Prochlorococcus marinus (strain AS9601).